A 156-amino-acid polypeptide reads, in one-letter code: Small ribosomal subunit protein uS7 (156 aa).

The protein belongs to the universal ribosomal protein uS7 family. In terms of assembly, part of the 30S ribosomal subunit. Contacts proteins S9 and S11.

In terms of biological role, one of the primary rRNA binding proteins, it binds directly to 16S rRNA where it nucleates assembly of the head domain of the 30S subunit. Is located at the subunit interface close to the decoding center, probably blocks exit of the E-site tRNA. The chain is Small ribosomal subunit protein uS7 from Pediococcus pentosaceus (strain ATCC 25745 / CCUG 21536 / LMG 10740 / 183-1w).